An 86-amino-acid polypeptide reads, in one-letter code: Large ribosomal subunit protein bL27 (86 aa).

The segment at 1 to 26 (MATKKAGGSSRNGRDSAGRRLGIKKS) is disordered.

The protein belongs to the bacterial ribosomal protein bL27 family.

This chain is Large ribosomal subunit protein bL27, found in Rickettsia typhi (strain ATCC VR-144 / Wilmington).